The sequence spans 280 residues: Large ribosomal subunit protein uL2 (280 aa).

The disordered stretch occupies residues 229-280; it reads DHPHGGGEGKAPIGHPSPLTPWGKPTLGYKTRKKRKPSDRFIIQRANDKKEK.

The protein belongs to the universal ribosomal protein uL2 family. Part of the 50S ribosomal subunit. Forms a bridge to the 30S subunit in the 70S ribosome.

Functionally, one of the primary rRNA binding proteins. Required for association of the 30S and 50S subunits to form the 70S ribosome, for tRNA binding and peptide bond formation. It has been suggested to have peptidyltransferase activity; this is somewhat controversial. Makes several contacts with the 16S rRNA in the 70S ribosome. The sequence is that of Large ribosomal subunit protein uL2 from Dictyoglomus turgidum (strain DSM 6724 / Z-1310).